A 470-amino-acid polypeptide reads, in one-letter code: Growth/differentiation factor 6 (470 aa).

The N-terminal stretch at Met-1–Gly-22 is a signal peptide. The propeptide occupies Phe-23 to Arg-350. Positions Ile-28–Val-98 are disordered. Basic and acidic residues predominate over residues Ser-45–Arg-80. Residue Asn-120 is glycosylated (N-linked (GlcNAc...) asparagine). 2 disordered regions span residues Pro-247–Phe-272 and Thr-308–Arg-366. The span at Gly-321–Gly-333 shows a compositional bias: pro residues. Positions Gly-345–Arg-366 are enriched in basic residues. 3 disulfide bridges follow: Cys-369-Cys-435, Cys-398-Cys-467, and Cys-402-Cys-469.

It belongs to the TGF-beta family. As to quaternary structure, homodimer; disulfide-linked.

It is found in the secreted. Functionally, growth factor that controls proliferation and cellular differentiation in the retina and bone formation. Plays a key role in regulating apoptosis during retinal development. Establishes dorsal-ventral positional information in the retina and controls the formation of the retinotectal map. Required for normal formation of bones and joints in the limbs, skull, digits and axial skeleton. Plays a key role in establishing boundaries between skeletal elements during development. Regulation of GDF6 expression seems to be a mechanism for evolving species-specific changes in skeletal structures. Seems to positively regulate differentiation of chondrogenic tissue through the growth factor receptors subunits BMPR1A, BMPR1B, BMPR2 and ACVR2A, leading to the activation of SMAD1-SMAD5-SMAD8 complex. The regulation of chondrogenic differentiation is inhibited by NOG. Also involved in the induction of adipogenesis from mesenchymal stem cells. This mechanism acts through the growth factor receptors subunits BMPR1A, BMPR2 and ACVR2A and the activation of SMAD1-SMAD5-SMAD8 complex and MAPK14/p38. This Bos taurus (Bovine) protein is Growth/differentiation factor 6 (GDF6).